Consider the following 361-residue polypeptide: Glutaminyl-peptide cyclotransferase (361 aa).

A signal peptide spans 1-28; that stretch reads MAGGRHRRVVGTLHLLLLVAALPWASRG. N-linked (GlcNAc...) asparagine glycosylation occurs at Asn-49. Cys-139 and Cys-164 are joined by a disulfide. Residue Asp-159 coordinates Zn(2+). The active-site Proton acceptor is the Glu-201. Glu-202 is a Zn(2+) binding site. Asp-248 (proton acceptor) is an active-site residue. A glycan (N-linked (GlcNAc...) asparagine) is linked at Asn-296. Residue His-330 participates in Zn(2+) binding.

Belongs to the glutaminyl-peptide cyclotransferase family.

It localises to the secreted. The enzyme catalyses N-terminal L-glutaminyl-[peptide] = N-terminal 5-oxo-L-prolyl-[peptide] + NH4(+). Responsible for the biosynthesis of pyroglutamyl peptides. Has a bias against acidic and tryptophan residues adjacent to the N-terminal glutaminyl residue and a lack of importance of chain length after the second residue. Also catalyzes N-terminal pyroglutamate formation. In vitro, catalyzes pyroglutamate formation of N-terminally truncated form of APP amyloid-beta peptides [Glu-3]-amyloid-beta. May be involved in the N-terminal pyroglutamate formation of several amyloid-related plaque-forming peptides. This chain is Glutaminyl-peptide cyclotransferase (QPCT), found in Homo sapiens (Human).